A 72-amino-acid polypeptide reads, in one-letter code: Translation initiation factor IF-1 (72 aa).

Positions 1–72 constitute an S1-like domain; sequence MSKQSSIEQD…TKGRIVFRYK (72 aa).

It belongs to the IF-1 family. As to quaternary structure, component of the 30S ribosomal translation pre-initiation complex which assembles on the 30S ribosome in the order IF-2 and IF-3, IF-1 and N-formylmethionyl-tRNA(fMet); mRNA recruitment can occur at any time during PIC assembly.

The protein localises to the cytoplasm. Functionally, one of the essential components for the initiation of protein synthesis. Stabilizes the binding of IF-2 and IF-3 on the 30S subunit to which N-formylmethionyl-tRNA(fMet) subsequently binds. Helps modulate mRNA selection, yielding the 30S pre-initiation complex (PIC). Upon addition of the 50S ribosomal subunit IF-1, IF-2 and IF-3 are released leaving the mature 70S translation initiation complex. The protein is Translation initiation factor IF-1 of Cytophaga hutchinsonii (strain ATCC 33406 / DSM 1761 / CIP 103989 / NBRC 15051 / NCIMB 9469 / D465).